Here is a 133-residue protein sequence, read N- to C-terminus: Ribonuclease P protein component (133 aa).

It belongs to the RnpA family. As to quaternary structure, consists of a catalytic RNA component (M1 or rnpB) and a protein subunit.

It carries out the reaction Endonucleolytic cleavage of RNA, removing 5'-extranucleotides from tRNA precursor.. In terms of biological role, RNaseP catalyzes the removal of the 5'-leader sequence from pre-tRNA to produce the mature 5'-terminus. It can also cleave other RNA substrates such as 4.5S RNA. The protein component plays an auxiliary but essential role in vivo by binding to the 5'-leader sequence and broadening the substrate specificity of the ribozyme. The chain is Ribonuclease P protein component from Paramagnetospirillum magneticum (strain ATCC 700264 / AMB-1) (Magnetospirillum magneticum).